Consider the following 242-residue polypeptide: Probable transcriptional regulatory protein Bamb_2332 (242 aa).

It belongs to the TACO1 family.

The protein localises to the cytoplasm. This Burkholderia ambifaria (strain ATCC BAA-244 / DSM 16087 / CCUG 44356 / LMG 19182 / AMMD) (Burkholderia cepacia (strain AMMD)) protein is Probable transcriptional regulatory protein Bamb_2332.